The primary structure comprises 120 residues: MFALPGYDAFLGFLLIAAAVPVLALVTNKLLAPKSRAGERQLTYESGMEPIGGAWIQFNIRYYMFALVFVIFDVETVFLYPWAVAFNRLGLLAFIEALIFIAILLVALAYAWRKGALEWS.

3 helical membrane-spanning segments follow: residues 6–26 (GYDA…LALV), 64–84 (MFAL…PWAV), and 89–109 (LGLL…VALA).

This sequence belongs to the complex I subunit 3 family. NDH-1 can be composed of about 15 different subunits; different subcomplexes with different compositions have been identified which probably have different functions.

It is found in the cellular thylakoid membrane. The enzyme catalyses a plastoquinone + NADH + (n+1) H(+)(in) = a plastoquinol + NAD(+) + n H(+)(out). The catalysed reaction is a plastoquinone + NADPH + (n+1) H(+)(in) = a plastoquinol + NADP(+) + n H(+)(out). Its function is as follows. NDH-1 shuttles electrons from an unknown electron donor, via FMN and iron-sulfur (Fe-S) centers, to quinones in the respiratory and/or the photosynthetic chain. The immediate electron acceptor for the enzyme in this species is believed to be plastoquinone. Couples the redox reaction to proton translocation, and thus conserves the redox energy in a proton gradient. Cyanobacterial NDH-1 also plays a role in inorganic carbon-concentration. This is NAD(P)H-quinone oxidoreductase subunit 3 from Synechococcus sp. (strain CC9902).